The chain runs to 207 residues: Lipid A acyltransferase PagP (207 aa).

The N-terminal stretch at 1–24 (MKFDLTTAYTLSIPLLASSGTVLA) is a signal peptide. Residues His-79, Asp-122, and Ser-123 contribute to the active site.

The protein belongs to the lipid A palmitoyltransferase family. Homodimer.

The protein localises to the cell outer membrane. It carries out the reaction a lipid A + a 1,2-diacyl-sn-glycero-3-phosphocholine = a hepta-acyl lipid A + a 2-acyl-sn-glycero-3-phosphocholine. The catalysed reaction is a lipid IVA + a 1,2-diacyl-sn-glycero-3-phosphocholine = a lipid IVB + a 2-acyl-sn-glycero-3-phosphocholine. The enzyme catalyses a lipid IIA + a 1,2-diacyl-sn-glycero-3-phosphocholine = a lipid IIB + a 2-acyl-sn-glycero-3-phosphocholine. Its function is as follows. Transfers a fatty acid residue from the sn-1 position of a phospholipid to the N-linked hydroxyfatty acid chain on the proximal unit of lipid A or its precursors. The protein is Lipid A acyltransferase PagP of Photorhabdus asymbiotica subsp. asymbiotica (strain ATCC 43949 / 3105-77) (Xenorhabdus luminescens (strain 2)).